The primary structure comprises 419 residues: DNA ligase (419 aa).

Residues 1–120 (MLNQFPGQLS…ARQKRGAHTN (120 aa)) form an NTD region. An AD domain region spans residues 121-317 (RGMIPPMLVK…NYHSPHLAKL (197 aa)). The active-site N6-AMP-lysine intermediate is the K151. Positions 318–419 (KPLLDAEFIL…REPINVLEII (102 aa)) are OB domain.

It belongs to the ATP-dependent DNA ligase family.

The protein localises to the virion. The catalysed reaction is ATP + (deoxyribonucleotide)n-3'-hydroxyl + 5'-phospho-(deoxyribonucleotide)m = (deoxyribonucleotide)n+m + AMP + diphosphate.. Very low-fidelity DNA ligase that seals nicks in double-stranded DNA during DNA repair. Together with the viral repair DNA polymerase X, fills the single nucleotide gaps generated by the AP endonuclease. It is not essential for viral replication and recombination. Displays a very low adenylation activity towards DNA with 3'-dideoxy- or 3'-amino-terminated nicks compared to regular nick DNA. The protein is DNA ligase of Ornithodoros (relapsing fever ticks).